Consider the following 639-residue polypeptide: Carbon monoxide dehydrogenase (639 aa).

Residues cysteine 41, cysteine 49, cysteine 50, cysteine 53, cysteine 58, and cysteine 72 each coordinate [4Fe-4S] cluster. Residues histidine 265, cysteine 300, cysteine 338, cysteine 451, cysteine 481, and cysteine 531 each contribute to the [Ni-4Fe-4S] cluster site.

Belongs to the Ni-containing carbon monoxide dehydrogenase family. In terms of assembly, homodimer. [4Fe-4S] cluster is required as a cofactor. Requires [Ni-4Fe-4S] cluster as cofactor.

The protein resides in the cytoplasm. Its subcellular location is the cell inner membrane. The catalysed reaction is CO + 2 oxidized [2Fe-2S]-[ferredoxin] + H2O = 2 reduced [2Fe-2S]-[ferredoxin] + CO2 + 2 H(+). Its function is as follows. Allows growth in a CO-dependent manner in the dark. CODH oxidizes carbon monoxide coupled, via CooF, to the reduction of a hydrogen cation by a hydrogenase (possibly CooH). The polypeptide is Carbon monoxide dehydrogenase (cooS) (Rhodospirillum rubrum).